A 488-amino-acid polypeptide reads, in one-letter code: uncharacterized protein (488 aa).

12 helical membrane-spanning segments follow: residues F2–V22, V27–S47, F59–V79, L106–L126, I176–L196, L241–V261, I275–Y295, V314–L334, I347–F367, I368–A388, V438–F458, and D461–I481.

The protein belongs to the GntP permease family.

The protein localises to the cell inner membrane. This is an uncharacterized protein from Haemophilus influenzae (strain ATCC 51907 / DSM 11121 / KW20 / Rd).